Consider the following 274-residue polypeptide: Diaminopimelate epimerase (274 aa).

The substrate site is built by asparagine 11, glutamine 44, and asparagine 64. The active-site Proton donor is the cysteine 73. Substrate contacts are provided by residues 74–75 (GN), asparagine 157, asparagine 190, and 208–209 (ER). The active-site Proton acceptor is the cysteine 217. Position 218–219 (218–219 (GS)) interacts with substrate.

Belongs to the diaminopimelate epimerase family. Homodimer.

The protein localises to the cytoplasm. It carries out the reaction (2S,6S)-2,6-diaminopimelate = meso-2,6-diaminopimelate. It functions in the pathway amino-acid biosynthesis; L-lysine biosynthesis via DAP pathway; DL-2,6-diaminopimelate from LL-2,6-diaminopimelate: step 1/1. Catalyzes the stereoinversion of LL-2,6-diaminopimelate (L,L-DAP) to meso-diaminopimelate (meso-DAP), a precursor of L-lysine and an essential component of the bacterial peptidoglycan. The polypeptide is Diaminopimelate epimerase (Haemophilus influenzae (strain PittEE)).